A 72-amino-acid chain; its full sequence is Translational regulator CsrA (72 aa).

It belongs to the CsrA/RsmA family. In terms of assembly, homodimer; the beta-strands of each monomer intercalate to form a hydrophobic core, while the alpha-helices form wings that extend away from the core.

The protein localises to the cytoplasm. In terms of biological role, a translational regulator that binds mRNA to regulate translation initiation and/or mRNA stability. Usually binds in the 5'-UTR at or near the Shine-Dalgarno sequence preventing ribosome-binding, thus repressing translation. Its main target seems to be the major flagellin gene, while its function is anatagonized by FliW. The protein is Translational regulator CsrA of Clostridium novyi (strain NT).